Reading from the N-terminus, the 1223-residue chain is RNA-binding protein 20 (1223 aa).

3 disordered regions span residues 1 to 59, 238 to 288, and 306 to 381; these read MVLA…QAGL, QAYG…PTSQ, and GEVG…GARR. The segment covering 29–57 has biased composition (pro residues); it reads APAPPAPPGPRGMQPPPPPPPPPPPPPQA. 2 stretches are compositionally biased toward polar residues: residues 238-261 and 314-331; these read QAYG…SGSV and GPNS…QSKP. Residues 410 to 444 form a U1-type zinc finger; it reads HLPHICSICDKKVFDLKDWELHVKGKLHAQKCLLF. One can recognise an RRM domain in the interval 520–595; the sequence is RVVHICNLPE…EKLLIRMSKR (76 aa). Over residues 626-636 the composition is skewed to basic and acidic residues; it reads EADRYGPERPR. Disordered stretches follow at residues 626 to 902, 971 to 995, and 1042 to 1102; these read EADR…TNME, EISL…DVEM, and MSSP…STQE. The interval 630–657 is RS; it reads YGPERPRSRSPVSRSLSPRSHTPSFTSC. Phosphoserine is present on residues serine 637, serine 639, serine 642, serine 644, serine 662, and serine 681. Residues 638–662 show a composition bias toward low complexity; it reads RSPVSRSLSPRSHTPSFTSCSSSHS. Composition is skewed to basic and acidic residues over residues 676–711 and 718–737; these read DSWE…MWAH and RQVD…GYRE. Low complexity predominate over residues 742–752; that stretch reads SGSPSSLHSVS. Position 744 is a phosphoserine (serine 744). Basic and acidic residues-rich tracts occupy residues 755–774 and 786–852; these read KSRE…DKYL and RKDE…KEEQ. Phosphoserine occurs at positions 803, 861, 872, 887, 889, 973, 976, and 1044. Over residues 864 to 884 the composition is skewed to basic and acidic residues; sequence RQEKETESSDAENTRTRKEQD. Polar residues predominate over residues 1083–1102; the sequence is STPTETDLQSQACQGVSTQE. Phosphoserine occurs at positions 1111 and 1116. The Matrin-type zinc finger occupies 1157–1188; sequence FYCKLCGLFYTSEEMAKMSHCRSAVHYRNLQK. Residues 1197 to 1223 form a disordered region; that stretch reads GLKETEGAGSPRPEDSGIVPHFERKKL. A Phosphoserine modification is found at serine 1206.

In terms of assembly, associates with components of the U1 and U2 U1 small nuclear ribonucleoprotein complexes. Post-translationally, phosphorylation regulates the subcellular localization. Phosphorylation of Ser-637 and Ser-639 in the RS (arginine/serine-rich) region promotes nuclear localization of the protein. In contrast, phosphorylation of the C-terminal disordered region promotes localization to cytoplasmic ribonucleoprotein granules.

It is found in the nucleus. The protein localises to the cytoplasm. The protein resides in the cytoplasmic ribonucleoprotein granule. Functionally, RNA-binding protein that acts as a regulator of mRNA splicing of a subset of genes encoding key structural proteins involved in cardiac development, such as TTN (Titin), CACNA1C, CAMK2D or PDLIM5/ENH. Acts as a repressor of mRNA splicing: specifically binds the 5'UCUU-3' motif that is predominantly found within intronic sequences of pre-mRNAs, leading to the exclusion of specific exons in target transcripts. RBM20-mediated exon skipping is hormone-dependent and is essential for TTN isoform transition in both cardiac and skeletal muscles. RBM20-mediated exon skipping of TTN provides substrates for the formation of circular RNA (circRNAs) from the TTN transcripts. Together with RBM24, promotes the expression of short isoforms of PDLIM5/ENH in cardiomyocytes. The polypeptide is RNA-binding protein 20 (Sus scrofa (Pig)).